Consider the following 603-residue polypeptide: Dual specificity protein phosphatase CDC14A (603 aa).

Positions 7–162 (ELIGACEFMK…GLQHGFFDFE (156 aa)) are a. The linker stretch occupies residues 163–176 (TFDAEEYEHYERVE). The tract at residues 177 to 343 (NGDFNWIVPG…QGDIFRSKLK (167 aa)) is b. Residues 179 to 336 (DFNWIVPGKF…KQASLWVQGD (158 aa)) enclose the Tyrosine-protein phosphatase domain. Cys-278 functions as the Phosphocysteine intermediate in the catalytic mechanism. Phosphoserine is present on Ser-484. Residues 518-538 (NGSTQTPGRNYPELNNNQYTR) show a composition bias toward polar residues. Residues 518 to 583 (NGSTQTPGRN…RPSFPGSLSS (66 aa)) form a disordered region. 2 stretches are compositionally biased toward low complexity: residues 539–558 (SSNSNSSSSSSGLGGNLNSS) and 573–583 (LRPSFPGSLSS). Ser-592 carries the post-translational modification Phosphoserine.

This sequence belongs to the protein-tyrosine phosphatase family. Non-receptor class CDC14 subfamily. As to quaternary structure, interacts with KIF20A. Interaction is required to localize CDC14 to the midzone of the mitotic spindle. As to expression, expressed in the inner ear.

Its subcellular location is the nucleus. It localises to the cytoplasm. It is found in the cytoskeleton. The protein resides in the microtubule organizing center. The protein localises to the centrosome. Its subcellular location is the spindle. It localises to the cell projection. It is found in the kinocilium. The protein resides in the spindle pole. The protein localises to the stereocilium. It carries out the reaction O-phospho-L-tyrosyl-[protein] + H2O = L-tyrosyl-[protein] + phosphate. It catalyses the reaction O-phospho-L-seryl-[protein] + H2O = L-seryl-[protein] + phosphate. The catalysed reaction is O-phospho-L-threonyl-[protein] + H2O = L-threonyl-[protein] + phosphate. Functionally, dual-specificity phosphatase. Required for centrosome separation and productive cytokinesis during cell division. Dephosphorylates SIRT2 around early anaphase. May dephosphorylate the APC subunit FZR1/CDH1, thereby promoting APC-FZR1 dependent degradation of mitotic cyclins and subsequent exit from mitosis. Required for normal hearing. This chain is Dual specificity protein phosphatase CDC14A (Cdc14a), found in Mus musculus (Mouse).